A 323-amino-acid chain; its full sequence is Putative divalent cation/proton antiporter TMEM165 (323 aa).

Positions 1–33 (MAAAARGSGRAPTRRLLVLLLLQLLWAPAGVRA) are cleaved as a signal peptide. At 34 to 89 (GPEEDLSHRNQEPPAPAQQLQPQPAAVQGLEPARAEKGLTPVAPVHTNKEDAAAQT) the chain is on the lumenal side. The span at 35 to 44 (PEEDLSHRNQ) shows a compositional bias: basic and acidic residues. Positions 35–60 (PEEDLSHRNQEPPAPAQQLQPQPAAV) are disordered. The segment covering 50–59 (AQQLQPQPAA) has biased composition (low complexity). A helical membrane pass occupies residues 90 to 110 (NLGFIHAFVAAISVIIVSELG). The Cytoplasmic segment spans residues 111–126 (DKTFFIAAIMAMRYNR). The helical transmembrane segment at 127-147 (LTVLAGAMLALALMTCLSVLF) threads the bilayer. Over 148–151 (GYAT) the chain is Lumenal. The helical transmembrane segment at 152-172 (TVIPRVYTYYVSTALFAIFGI) threads the bilayer. The Cytoplasmic segment spans residues 173–227 (RMLREGLKMSPDEGQEELEEVQAELKKKDEEFQRTKLLNGPDVETGTSTAIPQKK). The stretch at 184–211 (DEGQEELEEVQAELKKKDEEFQRTKLLN) forms a coiled coil. A helical transmembrane segment spans residues 228–248 (WLHFISPIFVQALTLTFLAEW). Residues 249-266 (GDRSQLTTIVLAAREDPY) lie on the Lumenal side of the membrane. The chain crosses the membrane as a helical span at residues 267-287 (GVAVGGTVGHCLCTGLAVIGG). Topologically, residues 288-298 (RMIAQKISVRT) are cytoplasmic. Residues 299–319 (VTIIGGIVFLAFAFSALFISP) traverse the membrane as a helical segment. Topologically, residues 320–323 (ESGF) are lumenal.

The protein belongs to the GDT1 family. Expressed in mammary epithelial cells (at protein level).

The protein resides in the golgi apparatus membrane. It carries out the reaction Ca(2+)(in) + n H(+)(out) = Ca(2+)(out) + n H(+)(in). The enzyme catalyses Mn(2+)(in) + n H(+)(out) = Mn(2+)(out) + n H(+)(in). Its function is as follows. Putative divalent cation:proton antiporter that exchanges calcium or manganese ions for protons across the Golgi membrane. Mediates the reversible transport of calcium or manganese to the Golgi lumen driven by the proton gradient and possibly the membrane potential generated by V-ATPase. Provides calcium or manganese cofactors to resident Golgi enzymes and contributes to the maintenance of an acidic luminal Golgi pH required for proper functioning of the secretory pathway. Promotes Ca(2+) storage within the Golgi lumen of the mammary epithelial cells to be then secreted into milk. The transport mechanism and stoichiometry remains to be elucidated. The protein is Putative divalent cation/proton antiporter TMEM165 of Mus musculus (Mouse).